We begin with the raw amino-acid sequence, 346 residues long: Biotin synthase (346 aa).

The Radical SAM core domain maps to 38-256; the sequence is RQVQVSTLLS…IAVARIMMPT (219 aa). Positions 53, 57, and 60 each coordinate [4Fe-4S] cluster. [2Fe-2S] cluster contacts are provided by C97, C128, C188, and R260.

This sequence belongs to the radical SAM superfamily. Biotin synthase family. In terms of assembly, homodimer. It depends on [4Fe-4S] cluster as a cofactor. The cofactor is [2Fe-2S] cluster.

The enzyme catalyses (4R,5S)-dethiobiotin + (sulfur carrier)-SH + 2 reduced [2Fe-2S]-[ferredoxin] + 2 S-adenosyl-L-methionine = (sulfur carrier)-H + biotin + 2 5'-deoxyadenosine + 2 L-methionine + 2 oxidized [2Fe-2S]-[ferredoxin]. It participates in cofactor biosynthesis; biotin biosynthesis; biotin from 7,8-diaminononanoate: step 2/2. In terms of biological role, catalyzes the conversion of dethiobiotin (DTB) to biotin by the insertion of a sulfur atom into dethiobiotin via a radical-based mechanism. The protein is Biotin synthase of Shigella dysenteriae serotype 1 (strain Sd197).